The chain runs to 896 residues: Protein translocase subunit SecA (896 aa).

ATP is bound by residues glutamine 87, 105-109, and aspartate 507; that span reads GEGKT. The tract at residues 855 to 879 is disordered; sequence LSENDEASETQTFRRQEKKIGRNDP. A compositionally biased stretch (basic and acidic residues) spans 866–876; that stretch reads TFRRQEKKIGR. Residues cysteine 880, cysteine 882, cysteine 891, and histidine 892 each coordinate Zn(2+).

This sequence belongs to the SecA family. In terms of assembly, monomer and homodimer. Part of the essential Sec protein translocation apparatus which comprises SecA, SecYEG and auxiliary proteins SecDF-YajC and YidC. Zn(2+) serves as cofactor.

It is found in the cell inner membrane. It localises to the cytoplasm. The enzyme catalyses ATP + H2O + cellular proteinSide 1 = ADP + phosphate + cellular proteinSide 2.. Part of the Sec protein translocase complex. Interacts with the SecYEG preprotein conducting channel. Has a central role in coupling the hydrolysis of ATP to the transfer of proteins into and across the cell membrane, serving both as a receptor for the preprotein-SecB complex and as an ATP-driven molecular motor driving the stepwise translocation of polypeptide chains across the membrane. The sequence is that of Protein translocase subunit SecA from Legionella pneumophila (strain Lens).